The sequence spans 1520 residues: DNA topoisomerase 2 top-2 (1520 aa).

Residues 1-10 (MSDSDSEFSI) are compositionally biased toward acidic residues. The segment at 1–40 (MSDSDSEFSIEDSPKKKTAPKKEKASPKKKKDDANESMVM) is disordered. Residues 12-34 (DSPKKKTAPKKEKASPKKKKDDA) are compositionally biased toward basic and acidic residues. ATP contacts are provided by residues N126, N155, 183–185 (SSN), 196–203 (GRNGYGAK), and 411–413 (QTK). Residues 490 to 607 (CTLILTEGDS…SLIQRNFVEE (118 aa)) enclose the Toprim domain. Mg(2+)-binding residues include E496, D576, and D578. The region spanning 750–1219 (IPCLVDGFKP…TWQDLWHEDL (470 aa)) is the Topo IIA-type catalytic domain. Y840 (O-(5'-phospho-DNA)-tyrosine intermediate) is an active-site residue. Residues 1249-1520 (AADAKTGRGP…RGRVVDSDSD (272 aa)) form a disordered region. A compositionally biased stretch (basic and acidic residues) spans 1283–1320 (TKAKYEKMSQPKKERVKKEPKEPKEPKKVKKEGQDIKK). The segment covering 1342-1364 (MSEESDVEFDEGIDFDSDDDGVE) has biased composition (acidic residues).

This sequence belongs to the type II topoisomerase family. As to quaternary structure, homodimer. Interacts with nmad-1; the interaction is required for localization of top-2 to DNA. Interacts with gcna-1; this interaction allows the resolution of topoisomerase 2 DNA-protein cross-links. Requires Mg(2+) as cofactor. The cofactor is Mn(2+). Ca(2+) serves as cofactor. As to expression, expressed in the hermaphrodite and male germline.

It is found in the nucleus. The protein localises to the nucleoplasm. Its subcellular location is the chromosome. The protein resides in the cytoplasm. It localises to the cytoskeleton. It is found in the spindle. The catalysed reaction is ATP-dependent breakage, passage and rejoining of double-stranded DNA.. Control of topological states of DNA by transient breakage and subsequent rejoining of DNA strands. Topoisomerase II makes double-strand breaks. Essential during mitosis in the adult germline and during embryogenesis for proper segregation of daughter chromosomes. Required for centromere resolution during mitosis. Required for chromosome segregation in anaphase of meiosis I during spermatogenesis. Promotes cleavage furrow stability during cytokinesis upon the presence of chromatin obstructions. Promotes DNA break formation upon zygotic genome activation in the Z2 and Z3 primordial germ cells in L1 larvae, thereby activating a checkpoint response. Essential for embryogenesis. This chain is DNA topoisomerase 2 top-2, found in Caenorhabditis elegans.